The chain runs to 101 residues: MAKKSMIARETKRAKTVEKYAAKRAELKAIINNHESSDDQIWEAQLKLQKLPRDASPSRQQRRCRITGRPHAVYRKFGLCRNKLREAAMRGDVPGLVKASW.

The protein belongs to the universal ribosomal protein uS14 family. Part of the 30S ribosomal subunit. Contacts proteins S3 and S10.

Binds 16S rRNA, required for the assembly of 30S particles and may also be responsible for determining the conformation of the 16S rRNA at the A site. This chain is Small ribosomal subunit protein uS14, found in Saccharophagus degradans (strain 2-40 / ATCC 43961 / DSM 17024).